The chain runs to 224 residues: 2-C-methyl-D-erythritol 4-phosphate cytidylyltransferase (224 aa).

This sequence belongs to the IspD/TarI cytidylyltransferase family. IspD subfamily.

The enzyme catalyses 2-C-methyl-D-erythritol 4-phosphate + CTP + H(+) = 4-CDP-2-C-methyl-D-erythritol + diphosphate. The protein operates within isoprenoid biosynthesis; isopentenyl diphosphate biosynthesis via DXP pathway; isopentenyl diphosphate from 1-deoxy-D-xylulose 5-phosphate: step 2/6. In terms of biological role, catalyzes the formation of 4-diphosphocytidyl-2-C-methyl-D-erythritol from CTP and 2-C-methyl-D-erythritol 4-phosphate (MEP). In Bordetella petrii (strain ATCC BAA-461 / DSM 12804 / CCUG 43448), this protein is 2-C-methyl-D-erythritol 4-phosphate cytidylyltransferase.